A 595-amino-acid polypeptide reads, in one-letter code: uncharacterized protein (595 aa).

The tract at residues 1–21 is disordered; the sequence is MSSQLKSTWAPVPSTKPSQPC. 11 WD repeats span residues 56-95, 100-143, 144-184, 187-226, 229-268, 313-352, 356-393, 433-472, 477-516, 520-559, and 564-594; these read EHTAPTTVARFSPSGYYVASGDNQGNVRIWDCAGEDKILK, AISG…GEIF, GHSS…FNRS, VHSKFVYDVRYSPNDERFASAGADGKVYVFDGKTGDQVYE, AHKGSIFSISWSPDSSQFVTSSAGYSCKIWDANTGSLIRE, GHQRSITAATLSPDATHFYTASYDGTVLSWDIGKQKAFPL, SHTNQVMQMIMADDHVITIGMDDTLRVIDIKQGCFAKD, KTIYQPSAVASHPLKSEFCVGGEDCCVYIHTLEKGELCEV, DSTAPITCLAYSPDGKYLACGDASGKVVLYDANSREVITS, FHTGRILGMSWNAKSTHLATASLDTNIHIYSVERPMKYIA, and HSLGATQVEWVSENELLSTGSDAAIKVWSVT.

Belongs to the WD repeat AIP1 family.

This is an uncharacterized protein from Schizosaccharomyces pombe (strain 972 / ATCC 24843) (Fission yeast).